We begin with the raw amino-acid sequence, 600 residues long: Long-chain-fatty-acid--CoA ligase FadD15 (600 aa).

Belongs to the ATP-dependent AMP-binding enzyme family.

It catalyses the reaction a long-chain fatty acid + ATP + CoA = a long-chain fatty acyl-CoA + AMP + diphosphate. The enzyme catalyses dodecanoate + ATP + CoA = dodecanoyl-CoA + AMP + diphosphate. The catalysed reaction is hexadecanoate + ATP + CoA = hexadecanoyl-CoA + AMP + diphosphate. It functions in the pathway lipid metabolism; fatty acid biosynthesis. Functionally, catalyzes the activation of long-chain fatty acids as acyl-coenzyme A (acyl-CoA), which are then transferred to the multifunctional polyketide synthase (PKS) type III for further chain extension. This Mycobacterium tuberculosis (strain ATCC 25618 / H37Rv) protein is Long-chain-fatty-acid--CoA ligase FadD15 (fadD15).